A 391-amino-acid chain; its full sequence is Probable chaperonin-like protein PrmG (391 aa).

The tract at residues 153–191 (TTRWSVRSSPPPSNTSARTASSPPRRATHSGCRSRSSTA) is disordered. The segment covering 154–174 (TRWSVRSSPPPSNTSARTASS) has biased composition (polar residues).

It belongs to the chaperonin (HSP60) family.

In terms of biological role, probably plays an essential role in the productive folding of PrmA and PrmC, and thus in the formation of the active PrmABCD complex. In Gordonia sp. (strain TY-5), this protein is Probable chaperonin-like protein PrmG.